Reading from the N-terminus, the 312-residue chain is Protoheme IX farnesyltransferase (312 aa).

9 helical membrane-spanning segments follow: residues 29–49, 50–70, 90–110, 117–137, 150–170, 177–197, 223–243, 248–268, and 292–312; these read VMSL…GHMN, PVLA…SGAL, IPAG…LSAF, LMVN…YAVV, IVIG…AATG, VVLF…LSLF, ALFY…LGFA, GAIS…MWVA, and LFAV…FGGF.

It belongs to the UbiA prenyltransferase family. Protoheme IX farnesyltransferase subfamily.

The protein resides in the cell inner membrane. It carries out the reaction heme b + (2E,6E)-farnesyl diphosphate + H2O = Fe(II)-heme o + diphosphate. It functions in the pathway porphyrin-containing compound metabolism; heme O biosynthesis; heme O from protoheme: step 1/1. Its function is as follows. Converts heme B (protoheme IX) to heme O by substitution of the vinyl group on carbon 2 of heme B porphyrin ring with a hydroxyethyl farnesyl side group. In Brucella anthropi (strain ATCC 49188 / DSM 6882 / CCUG 24695 / JCM 21032 / LMG 3331 / NBRC 15819 / NCTC 12168 / Alc 37) (Ochrobactrum anthropi), this protein is Protoheme IX farnesyltransferase.